A 546-amino-acid polypeptide reads, in one-letter code: Immunoglobulin-like domain-containing receptor 1 (546 aa).

The first 23 residues, 1–23, serve as a signal peptide directing secretion; it reads MAWPKLPAPWLLLCTWLPAGCLS. The Ig-like V-type domain occupies 24-162; sequence LLVTVQHTER…TSGDPDKEVK (139 aa). Residues 24 to 167 lie on the Extracellular side of the membrane; sequence LLVTVQHTER…DKEVKLIVLH (144 aa). Cysteine 45 and cysteine 145 are disulfide-bonded. The helical transmembrane segment at 168 to 188 threads the bilayer; that stretch reads WLTVIFIILGALLLLLLIGVC. Residues 189–546 lie on the Cytoplasmic side of the membrane; sequence WCQCCPQYCC…SSHSGRSVVI (358 aa). Residues 399–546 form a disordered region; that stretch reads WSGRHRSSRL…SSHSGRSVVI (148 aa). Residues 442-457 show a composition bias toward basic and acidic residues; it reads RCQERPRRPSPRESTQ. Residues 458 to 467 are compositionally biased toward basic residues; it reads RHGRRRRHRS. 2 positions are modified to phosphoserine: serine 499 and serine 501. The segment covering 527 to 539 has biased composition (basic and acidic residues); sequence GSVERRSEKDSSH.

The protein belongs to the immunoglobulin superfamily. LISCH7 family. Homooligomer. Interacts with MARVELD2 and OCLN; the interaction is required to recruit MARVELD2 to tricellular contacts. Interacts (via C-terminus) with TRA2A, TRA2B and SRSF1. Interacts with PLSCR1.

The protein localises to the cell membrane. The protein resides in the cell junction. It localises to the tight junction. It is found in the nucleus. Its subcellular location is the cytoplasm. Functionally, maintains epithelial barrier function by recruiting MARVELD2/tricellulin to tricellular tight junctions (tTJs). Crucial for normal hearing by maintaining the structural and functional integrity of tTJs, which are critical for the survival of auditory neurosensory HCs. Mediates fatty acids and lipoproteins-stimulated CCK/cholecystokinin secretion in the small intestine. In the inner ear, may regulate alternative pre-mRNA splicing via binding to TRA2A, TRA2B and SRSF1. The sequence is that of Immunoglobulin-like domain-containing receptor 1 (ILDR1) from Pongo abelii (Sumatran orangutan).